The primary structure comprises 355 residues: Dihydroorotate dehydrogenase (quinone) (355 aa).

Residues A68–K72 and T92 contribute to the FMN site. A substrate-binding site is contributed by K72. N117–F121 provides a ligand contact to substrate. Residues N154 and N190 each coordinate FMN. N190 contacts substrate. S193 functions as the Nucleophile in the catalytic mechanism. N195 provides a ligand contact to substrate. Positions 232 and 260 each coordinate FMN. N261–T262 provides a ligand contact to substrate. Residues G286, G315, and Y336–S337 each bind FMN.

The protein belongs to the dihydroorotate dehydrogenase family. Type 2 subfamily. Monomer. FMN is required as a cofactor.

The protein resides in the cell membrane. The catalysed reaction is (S)-dihydroorotate + a quinone = orotate + a quinol. The protein operates within pyrimidine metabolism; UMP biosynthesis via de novo pathway; orotate from (S)-dihydroorotate (quinone route): step 1/1. Catalyzes the conversion of dihydroorotate to orotate with quinone as electron acceptor. This is Dihydroorotate dehydrogenase (quinone) from Nocardioides sp. (strain ATCC BAA-499 / JS614).